We begin with the raw amino-acid sequence, 287 residues long: 4-hydroxybenzoate octaprenyltransferase (287 aa).

Transmembrane regions (helical) follow at residues 22–42, 45–65, 95–115, 116–136, 140–160, 162–182, 214–234, 237–257, and 264–284; these read IGTY…SDGW, LQLL…GCVI, AINL…MLSW, STIY…FMKR, LPQL…FSEA, GEIP…TIAY, IGFL…ILAF, PYQL…LLIV, and CFQA…GIAI.

It belongs to the UbiA prenyltransferase family. Mg(2+) is required as a cofactor.

It localises to the cell inner membrane. The enzyme catalyses all-trans-octaprenyl diphosphate + 4-hydroxybenzoate = 4-hydroxy-3-(all-trans-octaprenyl)benzoate + diphosphate. Its pathway is cofactor biosynthesis; ubiquinone biosynthesis. Functionally, catalyzes the prenylation of para-hydroxybenzoate (PHB) with an all-trans polyprenyl group. Mediates the second step in the final reaction sequence of ubiquinone-8 (UQ-8) biosynthesis, which is the condensation of the polyisoprenoid side chain with PHB, generating the first membrane-bound Q intermediate 3-octaprenyl-4-hydroxybenzoate. This is 4-hydroxybenzoate octaprenyltransferase from Colwellia psychrerythraea (strain 34H / ATCC BAA-681) (Vibrio psychroerythus).